Here is a 302-residue protein sequence, read N- to C-terminus: Uricase (302 aa).

Catalysis depends on charge relay system residues lysine 22 and threonine 67. Residues threonine 67, aspartate 68, phenylalanine 163, arginine 180, glutamine 223, and asparagine 249 each coordinate urate. Histidine 251 serves as the catalytic Charge relay system.

It belongs to the uricase family. As to quaternary structure, homotetramer.

It catalyses the reaction urate + O2 + H2O = 5-hydroxyisourate + H2O2. The protein operates within purine metabolism; urate degradation; (S)-allantoin from urate: step 1/3. Functionally, catalyzes the oxidation of uric acid to 5-hydroxyisourate, which is further processed to form (S)-allantoin. The chain is Uricase (uox) from Arthrobacter globiformis.